The chain runs to 134 residues: Small ribosomal subunit protein uS8c (134 aa).

It belongs to the universal ribosomal protein uS8 family. Part of the 30S ribosomal subunit.

Its subcellular location is the plastid. It localises to the chloroplast. Functionally, one of the primary rRNA binding proteins, it binds directly to 16S rRNA central domain where it helps coordinate assembly of the platform of the 30S subunit. The sequence is that of Small ribosomal subunit protein uS8c (rps8) from Vitis vinifera (Grape).